The primary structure comprises 478 residues: Transcript termination protein A18 (478 aa).

Residues 98–254 (KLSTHRPMYM…NDVVNVLKVS (157 aa)) form the Helicase ATP-binding domain. 111 to 118 (LSCGFGKT) contributes to the ATP binding site. The DESH box signature appears at 204–207 (DESH). Positions 302–468 (PRNNLIVETV…GIEGTKEEPV (167 aa)) constitute a Helicase C-terminal domain.

Belongs to the helicase family. Poxviruses subfamily. As to quaternary structure, interacts with G2. Might be part of a transcription complex composed at least of G2, A18, and H5.

Its subcellular location is the virion. DNA helicase which seems to act as a postreplicative transcription termination factor. Involved in ATP-dependent release of nascent RNA. Forms a stable complex with single-stranded DNA, and to a lesser extent RNA. In Rabbit fibroma virus (strain Kasza) (RFV), this protein is Transcript termination protein A18.